The chain runs to 333 residues: T-cell surface glycoprotein CD1b-2 (333 aa).

A signal peptide spans 1-20 (MLLLPLLLLGVILPGGDNED). At 21 to 302 (VFQGPTSFHL…LYWGHPTSIG (282 aa)) the chain is on the extracellular side. Residues asparagine 38, asparagine 75, and asparagine 146 are each glycosylated (N-linked (GlcNAc...) asparagine). 3 cysteine pairs are disulfide-bonded: cysteine 120-cysteine 184, cysteine 149-cysteine 163, and cysteine 224-cysteine 279. The Ig-like domain maps to 185-295 (PRYLLGVLDA…LGDQDIILYW (111 aa)). Residues 303–323 (LILVAIIVPSLILSICLALWF) traverse the membrane as a helical segment. Topologically, residues 324–333 (WRRWSYQNIL) are cytoplasmic. An Internalization signal motif is present at residues 329–332 (YQNI).

Heterodimer with B2M (beta-2-microglobulin). Interacts with saposin C.

The protein resides in the cell membrane. It is found in the endosome membrane. Its subcellular location is the lysosome membrane. Antigen-presenting protein that binds self and non-self lipid and glycolipid antigens and presents them to T-cell receptors on natural killer T-cells. This is T-cell surface glycoprotein CD1b-2 from Ovis aries (Sheep).